Here is a 484-residue protein sequence, read N- to C-terminus: Replication-associated protein (484 aa).

Residues 146–153 (IRKYHQSV) carry the Nuclear localization signal motif.

It is found in the host nucleus. Functionally, plays an essential for the replication of viral DNA. Presumably cleaves viral genomic dsRNA replicative form to initiate rolling circle replication. The chain is Replication-associated protein from Chaetoceros (Chaetoceros sp. DNA virus 7).